The primary structure comprises 476 residues: Cobyric acid synthase (476 aa).

The 187-residue stretch at Ala242–Ala428 folds into the GATase cobBQ-type domain. Cys323 serves as the catalytic Nucleophile. His420 is a catalytic residue.

It belongs to the CobB/CobQ family. CobQ subfamily.

It functions in the pathway cofactor biosynthesis; adenosylcobalamin biosynthesis. Its function is as follows. Catalyzes amidations at positions B, D, E, and G on adenosylcobyrinic A,C-diamide. NH(2) groups are provided by glutamine, and one molecule of ATP is hydrogenolyzed for each amidation. In Janthinobacterium sp. (strain Marseille) (Minibacterium massiliensis), this protein is Cobyric acid synthase.